Reading from the N-terminus, the 225-residue chain is MSNETNCTLDFEQSVELFKEYNLFITAFLLFLTIILQYGYATRSKFIYILKMIVLWCFWPLNIAVGVISCIYPPNTGGLVAAIILTVFACLSFVGYWIQSIRLFKRCRSWWSFNPESNAVGSILLTNGQQCNFAIESVPMVLSPIIKNGVLYCEGQWLAKCEPDHLPKDIFVCTPDRRNIYRMVQKYIGDQSGNKKRFATFVYAKQSVDTGELESVATGGSSLYT.

Topologically, residues M1–E20 are virion surface. The chain crosses the membrane as a helical span at residues Y21–A41. At T42–K51 the chain is on the intravirion side. A helical membrane pass occupies residues M52 to Y72. Topologically, residues P73–G77 are virion surface. The chain crosses the membrane as a helical span at residues G78–I98. Over Q99–T225 the chain is Intravirion.

Belongs to the gammacoronaviruses M protein family. In terms of assembly, homomultimer. Interacts with envelope E protein in the budding compartment of the host cell, which is located between endoplasmic reticulum and the Golgi complex. Forms a complex with HE and S proteins. Interacts with nucleocapsid N protein. This interaction probably participates in RNA packaging into the virus.

The protein localises to the virion membrane. It localises to the host Golgi apparatus membrane. In terms of biological role, component of the viral envelope that plays a central role in virus morphogenesis and assembly via its interactions with other viral proteins. The chain is Membrane protein from Gallus gallus (Chicken).